We begin with the raw amino-acid sequence, 207 residues long: Small ribosomal subunit protein uS4 (207 aa).

The disordered stretch occupies residues Lys-31–Gly-53. Residues Gly-42–Phe-52 show a composition bias toward polar residues. Positions Ser-97 to Glu-158 constitute an S4 RNA-binding domain.

Belongs to the universal ribosomal protein uS4 family. Part of the 30S ribosomal subunit. Contacts protein S5. The interaction surface between S4 and S5 is involved in control of translational fidelity.

Its function is as follows. One of the primary rRNA binding proteins, it binds directly to 16S rRNA where it nucleates assembly of the body of the 30S subunit. Functionally, with S5 and S12 plays an important role in translational accuracy. This is Small ribosomal subunit protein uS4 from Polaromonas sp. (strain JS666 / ATCC BAA-500).